A 243-amino-acid chain; its full sequence is Small ribosomal subunit protein uS3 (243 aa).

The KH type-2 domain maps to Ile39 to Glu110. The interval Asp215–Lys243 is disordered. Residues Gln233–Lys243 are compositionally biased toward basic and acidic residues.

It belongs to the universal ribosomal protein uS3 family. As to quaternary structure, part of the 30S ribosomal subunit. Forms a tight complex with proteins S10 and S14.

Its function is as follows. Binds the lower part of the 30S subunit head. Binds mRNA in the 70S ribosome, positioning it for translation. This Prochlorococcus marinus (strain MIT 9211) protein is Small ribosomal subunit protein uS3.